The chain runs to 41 residues: Omega-theraphotoxin-Hg1a (41 aa).

3 disulfides stabilise this stretch: C7/C21, C14/C26, and C20/C33.

The protein belongs to the neurotoxin 10 (Hwtx-1) family. 56 (SNX-482) subfamily. In terms of tissue distribution, expressed by the venom gland.

The protein resides in the secreted. Toxin that blocks vertebrate P/Q-type (Cav2.1/CACNA1A) and R-type (Cav2.3/CACNA1E) voltage-gated calcium channels. Also inhibits sodium channels (Nav) in bovine chromaffin cells by delaying sodium channel inactivation. The chain is Omega-theraphotoxin-Hg1a from Hysterocrates gigas (Cameroon red baboon tarantula).